The following is a 488-amino-acid chain: 3-octaprenyl-4-hydroxybenzoate carboxy-lyase (488 aa).

Asn-172 contacts Mn(2+). Prenylated FMN is bound by residues 175–177, 189–191, and 194–195; these read IYR, RWL, and RG. Glu-238 provides a ligand contact to Mn(2+). The active-site Proton donor is the Asp-287.

The protein belongs to the UbiD family. As to quaternary structure, homohexamer. Prenylated FMN is required as a cofactor. The cofactor is Mn(2+).

The protein localises to the cell membrane. It catalyses the reaction a 4-hydroxy-3-(all-trans-polyprenyl)benzoate + H(+) = a 2-(all-trans-polyprenyl)phenol + CO2. It functions in the pathway cofactor biosynthesis; ubiquinone biosynthesis. Functionally, catalyzes the decarboxylation of 3-octaprenyl-4-hydroxy benzoate to 2-octaprenylphenol, an intermediate step in ubiquinone biosynthesis. This is 3-octaprenyl-4-hydroxybenzoate carboxy-lyase from Pseudoalteromonas translucida (strain TAC 125).